A 257-amino-acid polypeptide reads, in one-letter code: Zinc uptake system ATP-binding protein ZurA (257 aa).

In terms of domain architecture, ABC transporter spans 5-241; that stretch reads IEVNNVSYHY…ADRELEILAE (237 aa). ATP is bound at residue 37 to 44; the sequence is GPNGSGKS.

It belongs to the ABC transporter superfamily.

Functionally, involved in a zinc uptake transport system. This chain is Zinc uptake system ATP-binding protein ZurA (zurA), found in Listeria innocua serovar 6a (strain ATCC BAA-680 / CLIP 11262).